The primary structure comprises 195 residues: Imidazoleglycerol-phosphate dehydratase (195 aa).

It belongs to the imidazoleglycerol-phosphate dehydratase family.

It localises to the cytoplasm. It catalyses the reaction D-erythro-1-(imidazol-4-yl)glycerol 3-phosphate = 3-(imidazol-4-yl)-2-oxopropyl phosphate + H2O. Its pathway is amino-acid biosynthesis; L-histidine biosynthesis; L-histidine from 5-phospho-alpha-D-ribose 1-diphosphate: step 6/9. The polypeptide is Imidazoleglycerol-phosphate dehydratase (Thiobacillus denitrificans (strain ATCC 25259 / T1)).